The chain runs to 580 residues: Glutamine--tRNA ligase (580 aa).

The short motif at 41–51 is the 'HIGH' region element; the sequence is PEPNGYLHIGH. Residues 42–44 and 48–54 contribute to the ATP site; these read EPN and HIGHAKA. L-glutamine contacts are provided by D74 and Y218. ATP-binding positions include T237, 285–286, and 293–295; these read RL and MSK. Positions 292–296 match the 'KMSKS' region motif; it reads VMSKR.

It belongs to the class-I aminoacyl-tRNA synthetase family. In terms of assembly, monomer.

It localises to the cytoplasm. It carries out the reaction tRNA(Gln) + L-glutamine + ATP = L-glutaminyl-tRNA(Gln) + AMP + diphosphate. This is Glutamine--tRNA ligase from Xylella fastidiosa (strain M12).